Reading from the N-terminus, the 74-residue chain is UPF0435 protein BAA_0470 (74 aa).

The protein belongs to the UPF0435 family.

In Bacillus anthracis (strain A0248), this protein is UPF0435 protein BAA_0470.